The sequence spans 245 residues: Small ribosomal subunit protein uS2 (245 aa).

The protein belongs to the universal ribosomal protein uS2 family.

The chain is Small ribosomal subunit protein uS2 from Pseudomonas fluorescens (strain SBW25).